The chain runs to 93 residues: Pyrimidine/purine nucleoside phosphorylase (93 aa).

Belongs to the nucleoside phosphorylase PpnP family.

It catalyses the reaction a purine D-ribonucleoside + phosphate = a purine nucleobase + alpha-D-ribose 1-phosphate. It carries out the reaction adenosine + phosphate = alpha-D-ribose 1-phosphate + adenine. The catalysed reaction is cytidine + phosphate = cytosine + alpha-D-ribose 1-phosphate. The enzyme catalyses guanosine + phosphate = alpha-D-ribose 1-phosphate + guanine. It catalyses the reaction inosine + phosphate = alpha-D-ribose 1-phosphate + hypoxanthine. It carries out the reaction thymidine + phosphate = 2-deoxy-alpha-D-ribose 1-phosphate + thymine. The catalysed reaction is uridine + phosphate = alpha-D-ribose 1-phosphate + uracil. The enzyme catalyses xanthosine + phosphate = alpha-D-ribose 1-phosphate + xanthine. Catalyzes the phosphorolysis of diverse nucleosides, yielding D-ribose 1-phosphate and the respective free bases. Can use uridine, adenosine, guanosine, cytidine, thymidine, inosine and xanthosine as substrates. Also catalyzes the reverse reactions. This is Pyrimidine/purine nucleoside phosphorylase from Magnetococcus marinus (strain ATCC BAA-1437 / JCM 17883 / MC-1).